We begin with the raw amino-acid sequence, 239 residues long: Putative HTH-type transcriptional regulator YkgA (239 aa).

Residues 19–117 enclose the HTH araC/xylS-type domain; that stretch reads QQLLEWIECN…GCSPREYRHR (99 aa). DNA-binding regions (H-T-H motif) lie at residues 36–57 and 84–107; these read EDIA…RNFM and MLDI…KKLF.

The protein is Putative HTH-type transcriptional regulator YkgA (ykgA) of Escherichia coli (strain K12).